A 127-amino-acid polypeptide reads, in one-letter code: uncharacterized protein (127 aa).

A helical membrane pass occupies residues 84-103; it reads IALLSLFISLSIRITCFPFF.

The protein localises to the membrane. This is an uncharacterized protein from Saccharomyces cerevisiae (strain ATCC 204508 / S288c) (Baker's yeast).